The sequence spans 102 residues: Aspartyl/glutamyl-tRNA(Asn/Gln) amidotransferase subunit C (102 aa).

The protein belongs to the GatC family. As to quaternary structure, heterotrimer of A, B and C subunits.

It catalyses the reaction L-glutamyl-tRNA(Gln) + L-glutamine + ATP + H2O = L-glutaminyl-tRNA(Gln) + L-glutamate + ADP + phosphate + H(+). The enzyme catalyses L-aspartyl-tRNA(Asn) + L-glutamine + ATP + H2O = L-asparaginyl-tRNA(Asn) + L-glutamate + ADP + phosphate + 2 H(+). Functionally, allows the formation of correctly charged Asn-tRNA(Asn) or Gln-tRNA(Gln) through the transamidation of misacylated Asp-tRNA(Asn) or Glu-tRNA(Gln) in organisms which lack either or both of asparaginyl-tRNA or glutaminyl-tRNA synthetases. The reaction takes place in the presence of glutamine and ATP through an activated phospho-Asp-tRNA(Asn) or phospho-Glu-tRNA(Gln). The polypeptide is Aspartyl/glutamyl-tRNA(Asn/Gln) amidotransferase subunit C (Leuconostoc citreum (strain KM20)).